Consider the following 238-residue polypeptide: Small ribosomal subunit protein uS2 (238 aa).

The protein belongs to the universal ribosomal protein uS2 family.

This Moorella thermoacetica (strain ATCC 39073 / JCM 9320) protein is Small ribosomal subunit protein uS2.